A 331-amino-acid chain; its full sequence is Glucokinase (331 aa).

Residue 14–19 coordinates ATP; the sequence is GDIGGT.

It belongs to the bacterial glucokinase family.

The protein resides in the cytoplasm. The catalysed reaction is D-glucose + ATP = D-glucose 6-phosphate + ADP + H(+). This is Glucokinase from Aromatoleum aromaticum (strain DSM 19018 / LMG 30748 / EbN1) (Azoarcus sp. (strain EbN1)).